Consider the following 244-residue polypeptide: Putative esophageal gland cell secretory protein 6 (244 aa).

The signal sequence occupies residues 1–22 (MDRRFTVFLVIALVTSIYEVLS). Cys88 and Cys91 are disulfide-bonded.

It belongs to the SelWTH family. SELT subfamily.

The polypeptide is Putative esophageal gland cell secretory protein 6 (HSP6) (Heterodera glycines (Soybean cyst nematode worm)).